Here is a 1458-residue protein sequence, read N- to C-terminus: Secretory phospholipase A2 receptor (1458 aa).

Positions 1-23 (MLLSLLLLLLLGAPRRCTEGAAA) are cleaved as a signal peptide. The Extracellular portion of the chain corresponds to 24-1393 (ALSPERVLKW…EHPGKGPSHS (1370 aa)). 17 disulfide bridges follow: cysteine 49–cysteine 62, cysteine 87–cysteine 104, cysteine 176–cysteine 202, cysteine 190–cysteine 217, cysteine 258–cysteine 352, cysteine 328–cysteine 344, cysteine 404–cysteine 499, cysteine 476–cysteine 491, cysteine 615–cysteine 632, cysteine 697–cysteine 794, cysteine 772–cysteine 786, cysteine 838–cysteine 935, cysteine 912–cysteine 927, cysteine 1065–cysteine 1085, cysteine 1207–cysteine 1221, cysteine 1278–cysteine 1373, and cysteine 1350–cysteine 1365. One can recognise a Ricin B-type lectin domain in the interval 49-113 (CIQAGKSVLT…CDSTHVSLRW (65 aa)). Residue asparagine 91 is glycosylated (N-linked (GlcNAc...) asparagine). Positions 171-219 (AHGTPCMFPFQYNHQWHHECTREGRQDDSLWCATTSRYERDEKWGFCPD) constitute a Fibronectin type-II domain. C-type lectin domains lie at 227 to 356 (CDAV…KKYL), 374 to 502 (TDCE…CKKP), 511 to 645 (SGCQ…KQPV), 660 to 798 (HPCY…KIPR), 815 to 939 (LFHQ…KRKT), 954 to 1098 (GTCP…EKIQ), 1117 to 1231 (LEYG…AICH), and 1243 to 1376 (ELCS…CKMK). Residues asparagine 408, asparagine 431, and asparagine 452 are each glycosylated (N-linked (GlcNAc...) asparagine). A helical membrane pass occupies residues 1394–1416 (IVPLAVALTLVVILAIITLSFYI). Topologically, residues 1417 to 1458 (YKQNKGFFRRLAGVGNSYYPTTNFSTIHLEENILISDLEKND) are cytoplasmic. Residues 1432-1438 (NSYYPTT) carry the Endocytosis signal motif.

As to quaternary structure, interacts with sPLA2-IB/PLA2G1B; this interaction mediates intracellular signaling as well as clearance of extracellular sPLA2-IB/PLA2G1B via endocytotic pathway. Interacts with sPLA2-X/PLA2G10; this interaction mediates sPLA2-X/PLA2G10 clearance and inactivation. Post-translationally, the secretory phospholipase A2 receptor form may be produced by the action of metalloproteinases. It contains all extracellular domains and only lacks transmembrane and cytosolic regions. It is however unclear whether this form is produced by proteolytic cleavage as suggested by some experiments, or by alternative splicing. As to expression, lung, skeletal muscle, brain, kidney and heart.

It is found in the cell membrane. The protein localises to the secreted. Its function is as follows. Receptor for secretory phospholipase A2 (sPLA2). Also able to bind to snake PA2-like toxins. Although its precise function remains unclear, binding of sPLA2 to its receptor participates in both positive and negative regulation of sPLA2 functions as well as clearance of sPLA2. Binding of sPLA2-IB/PLA2G1B induces various effects depending on the cell type, such as activation of the mitogen-activated protein kinase (MAPK) cascade to induce cell proliferation, the production of lipid mediators, selective release of arachidonic acid in bone marrow-derived mast cells. In neutrophils, binding of sPLA2-IB/PLA2G1B can activate p38 MAPK to stimulate elastase release and cell adhesion. May be involved in responses in pro-inflammatory cytokine productions during endotoxic shock. Also has endocytic properties and rapidly internalizes sPLA2 ligands, which is particularly important for the clearance of extracellular sPLA2s to protect their potent enzymatic activities. The soluble secretory phospholipase A2 receptor form is circulating and acts as a negative regulator of sPLA2 functions by blocking the biological functions of sPLA2-IB/PLA2G1B and sPLA2-X/PLA2G10. This is Secretory phospholipase A2 receptor (PLA2R1) from Oryctolagus cuniculus (Rabbit).